The chain runs to 315 residues: Homoserine O-succinyltransferase (315 aa).

Cys142 serves as the catalytic Acyl-thioester intermediate. Substrate contacts are provided by Lys163 and Ser192. His235 serves as the catalytic Proton acceptor. The active site involves Glu237. Arg249 contacts substrate.

This sequence belongs to the MetA family.

It localises to the cytoplasm. The enzyme catalyses L-homoserine + succinyl-CoA = O-succinyl-L-homoserine + CoA. It participates in amino-acid biosynthesis; L-methionine biosynthesis via de novo pathway; O-succinyl-L-homoserine from L-homoserine: step 1/1. In terms of biological role, transfers a succinyl group from succinyl-CoA to L-homoserine, forming succinyl-L-homoserine. In Shewanella piezotolerans (strain WP3 / JCM 13877), this protein is Homoserine O-succinyltransferase.